The primary structure comprises 475 residues: ATP synthase subunit beta 1 (475 aa).

153–160 provides a ligand contact to ATP; the sequence is GGAGVGKT.

It belongs to the ATPase alpha/beta chains family. As to quaternary structure, F-type ATPases have 2 components, CF(1) - the catalytic core - and CF(0) - the membrane proton channel. CF(1) has five subunits: alpha(3), beta(3), gamma(1), delta(1), epsilon(1). CF(0) has three main subunits: a(1), b(2) and c(9-12). The alpha and beta chains form an alternating ring which encloses part of the gamma chain. CF(1) is attached to CF(0) by a central stalk formed by the gamma and epsilon chains, while a peripheral stalk is formed by the delta and b chains.

The protein localises to the cell membrane. It carries out the reaction ATP + H2O + 4 H(+)(in) = ADP + phosphate + 5 H(+)(out). Functionally, produces ATP from ADP in the presence of a proton gradient across the membrane. The catalytic sites are hosted primarily by the beta subunits. This chain is ATP synthase subunit beta 1, found in Mycoplasmopsis pulmonis (strain UAB CTIP) (Mycoplasma pulmonis).